The primary structure comprises 154 residues: Fimbrial protein (154 aa).

Residues methionine 1–glycine 6 constitute a propeptide, leader sequence. Phenylalanine 7 bears the N-methylphenylalanine mark. Residues phenylalanine 7 to isoleucine 27 form a helical membrane-spanning segment. Residues cysteine 133 and cysteine 151 are joined by a disulfide bond. Serine 154 carries an O-linked (FucNAc...) serine glycan.

It belongs to the N-Me-Phe pilin family. As to quaternary structure, the pili are polar flexible filaments of about 5.4 nanometers diameter and 2.5 micrometers average length; they consist of only a single polypeptide chain arranged in a helical configuration of five subunits per turn in the assembled pilus. In terms of processing, O-glycosylated; glycan consists of 5NbetaOHC47NFmPse(alpha2-4)Xyl(beta1-3)FucNAc in beta1-O linkage to Ser.

The protein localises to the fimbrium. Its subcellular location is the membrane. This chain is Fimbrial protein (pilA), found in Pseudomonas aeruginosa.